Reading from the N-terminus, the 334-residue chain is Ethanol acetyltransferase 1 (334 aa).

The N-terminal 16 residues, M1–F16, are a transit peptide targeting the mitochondrion. Catalysis depends on charge relay system residues S124, D148, and H296.

This sequence belongs to the AB hydrolase superfamily.

Its subcellular location is the mitochondrion. It catalyses the reaction ethanol + acetyl-CoA = ethyl acetate + CoA. It carries out the reaction acetyl-CoA + H2O = acetate + CoA + H(+). The enzyme catalyses ethyl acetate + H2O = ethanol + acetate + H(+). Functionally, alcohol acetyltransferase that catalyzes the synthesis of ethyl acetate from ethanol and acetyl-CoA. Can also function as a thioesterase by hydrolyzing acetyl-CoA in the absence of ethanol, as well as esterase hydrolyzing ethyl acetate. The sequence is that of Ethanol acetyltransferase 1 (EAT1) from Hanseniaspora uvarum (Yeast).